Reading from the N-terminus, the 300-residue chain is Transmembrane protein 158 (300 aa).

Residues 1-20 (MLPLLAALLAAACPLPPVRG) form the signal peptide. An N-linked (GlcNAc...) asparagine glycan is attached at Asn-75. The next 2 membrane-spanning stretches (helical) occupy residues 231 to 251 (LVIV…IAGF) and 273 to 293 (VPAG…AAAV).

It belongs to the TMEM158 family. In terms of processing, N-glycosylated.

It is found in the membrane. Its function is as follows. Receptor for brain injury-derived neurotrophic peptide (BINP), a synthetic 13-mer peptide. This chain is Transmembrane protein 158 (TMEM158), found in Homo sapiens (Human).